A 375-amino-acid polypeptide reads, in one-letter code: uncharacterized protein (375 aa).

A GP-PDE domain is found at 52 to 301; that stretch reads VLLSAHRGSW…KQGFATYHES (250 aa).

This is an uncharacterized protein from Sinorhizobium fredii (strain NBRC 101917 / NGR234).